Consider the following 91-residue polypeptide: Small ribosomal subunit protein uS19 (91 aa).

Belongs to the universal ribosomal protein uS19 family.

In terms of biological role, protein S19 forms a complex with S13 that binds strongly to the 16S ribosomal RNA. In Synechococcus elongatus (strain ATCC 33912 / PCC 7942 / FACHB-805) (Anacystis nidulans R2), this protein is Small ribosomal subunit protein uS19.